Reading from the N-terminus, the 370-residue chain is Flagellar P-ring protein (370 aa).

The signal sequence occupies residues 1–27 (MPARPIPVPLLALALAAALAVPSPAAA).

It belongs to the FlgI family. The basal body constitutes a major portion of the flagellar organelle and consists of four rings (L,P,S, and M) mounted on a central rod.

It localises to the periplasm. The protein localises to the bacterial flagellum basal body. Its function is as follows. Assembles around the rod to form the L-ring and probably protects the motor/basal body from shearing forces during rotation. The chain is Flagellar P-ring protein from Anaeromyxobacter sp. (strain K).